We begin with the raw amino-acid sequence, 271 residues long: Regulatory protein RecX (271 aa).

It belongs to the RecX family.

It localises to the cytoplasm. Functionally, modulates RecA activity. The polypeptide is Regulatory protein RecX (Lactobacillus gasseri (strain ATCC 33323 / DSM 20243 / BCRC 14619 / CIP 102991 / JCM 1131 / KCTC 3163 / NCIMB 11718 / NCTC 13722 / AM63)).